The chain runs to 501 residues: Probable cytochrome P450 508A4 (501 aa).

Residues 1 to 21 (MIMLIKVFVLLLVVYILHNSY) form a helical membrane-spanning segment. Residue Cys-445 coordinates heme.

Belongs to the cytochrome P450 family. Requires heme as cofactor.

It is found in the membrane. The sequence is that of Probable cytochrome P450 508A4 (cyp508A4) from Dictyostelium discoideum (Social amoeba).